The primary structure comprises 270 residues: tRNA pseudouridine synthase A (270 aa).

D51 functions as the Nucleophile in the catalytic mechanism. Position 109 (Y109) interacts with substrate.

It belongs to the tRNA pseudouridine synthase TruA family. In terms of assembly, homodimer.

It catalyses the reaction uridine(38/39/40) in tRNA = pseudouridine(38/39/40) in tRNA. Its function is as follows. Formation of pseudouridine at positions 38, 39 and 40 in the anticodon stem and loop of transfer RNAs. This Variovorax paradoxus (strain S110) protein is tRNA pseudouridine synthase A.